The sequence spans 92 residues: Putative transcription elongation factor S-II-like protein 81R (92 aa).

The segment at 51-91 (GTVKCPGCGSRRVHALQRQTRSADEPMTLFAMCSECGKRWT) adopts a TFIIS-type zinc-finger fold. Zn(2+) is bound by residues cysteine 55, cysteine 58, cysteine 83, and cysteine 86.

This is Putative transcription elongation factor S-II-like protein 81R from Dryophytes versicolor (chameleon treefrog).